Reading from the N-terminus, the 220-residue chain is Endonuclease NucS (220 aa).

Belongs to the NucS endonuclease family.

Its subcellular location is the cytoplasm. Cleaves both 3' and 5' ssDNA extremities of branched DNA structures. This is Endonuclease NucS from Mycobacterium leprae (strain TN).